We begin with the raw amino-acid sequence, 527 residues long: MASDFLPVRRALLSVSDKTGLIDLARALVARNVELLSTGGTAKAIREAGLPVKDVAELTGFPEMMDGRVKTLHPLVHGGLLGRAGVDEAVMAEHGIVPIDLLVLNLYPFESVTVKADCTLADAVENIDIGGPAMLRSAAKNFARVAVATDPAQYADLLAELEVNDGQLSAAKRFALSVAAFNRVAQYDAAISNYLSAVADSSEAVPTRSPFPAQINSNFVKVMDLRYGENPHQSGAFYRDLYPVPGTLATFQQLQGKELSYNNLADADAAWECVRQFDAPACVIVKHANPCGVAVGAGCGDAYELAYATDPTSAFGGILAFNKTLDAATAKAILDRQFVEVLIAPDYEAGALEYATRKANVRVLKIPHGNGLNNYDTKRIGSGLLMQSADNRSMSLGELSVVTQRAPNEAELGDLLFAWRVAKYVKSNAIVYAKDSRTIGVGAGQMSRVVSAKIAALKAEEAKLTVAGSVMASDAFFPFRDGIDAAAAAGIKAVIQPGGSMRDGEVIAAADEHGIAMVFTGVRHFRH.

The MGS-like domain maps to 1–149; the sequence is MASDFLPVRR…KNFARVAVAT (149 aa).

The protein belongs to the PurH family.

It catalyses the reaction (6R)-10-formyltetrahydrofolate + 5-amino-1-(5-phospho-beta-D-ribosyl)imidazole-4-carboxamide = 5-formamido-1-(5-phospho-D-ribosyl)imidazole-4-carboxamide + (6S)-5,6,7,8-tetrahydrofolate. The enzyme catalyses IMP + H2O = 5-formamido-1-(5-phospho-D-ribosyl)imidazole-4-carboxamide. Its pathway is purine metabolism; IMP biosynthesis via de novo pathway; 5-formamido-1-(5-phospho-D-ribosyl)imidazole-4-carboxamide from 5-amino-1-(5-phospho-D-ribosyl)imidazole-4-carboxamide (10-formyl THF route): step 1/1. The protein operates within purine metabolism; IMP biosynthesis via de novo pathway; IMP from 5-formamido-1-(5-phospho-D-ribosyl)imidazole-4-carboxamide: step 1/1. In Xanthomonas euvesicatoria pv. vesicatoria (strain 85-10) (Xanthomonas campestris pv. vesicatoria), this protein is Bifunctional purine biosynthesis protein PurH.